We begin with the raw amino-acid sequence, 366 residues long: Dof zinc finger protein DOF1.3 (366 aa).

The disordered stretch occupies residues 22 to 103; the sequence is DPYSSSSHVL…KTTELKKPDK (82 aa). Composition is skewed to low complexity over residues 25 to 45 and 56 to 69; these read SSSS…SLSL and TDNT…NLNN. 2 stretches are compositionally biased toward basic and acidic residues: residues 70–83 and 91–103; these read ESKE…DQHS and EEEK…KPDK. The Dof-type zinc-finger motif lies at 105–159; sequence LPCPRCNSADTKFCYYNNYNVNQPRHFCRKCQRYWTAGGSMRIVPVGSGRRKNKG. Positions 107, 110, 132, and 135 each coordinate Zn(2+).

The protein resides in the nucleus. Its function is as follows. Transcription factor that binds specifically to a 5'-AA[AG]G-3' consensus core sequence. The chain is Dof zinc finger protein DOF1.3 (DOF1.3) from Arabidopsis thaliana (Mouse-ear cress).